Reading from the N-terminus, the 168-residue chain is Large ribosomal subunit protein uL10 (168 aa).

It belongs to the universal ribosomal protein uL10 family. In terms of assembly, part of the ribosomal stalk of the 50S ribosomal subunit. The N-terminus interacts with L11 and the large rRNA to form the base of the stalk. The C-terminus forms an elongated spine to which L12 dimers bind in a sequential fashion forming a multimeric L10(L12)X complex.

Its function is as follows. Forms part of the ribosomal stalk, playing a central role in the interaction of the ribosome with GTP-bound translation factors. The protein is Large ribosomal subunit protein uL10 of Ralstonia pickettii (strain 12J).